Consider the following 267-residue polypeptide: Type II pantothenate kinase (267 aa).

Residue 6–13 coordinates ATP; the sequence is DAGGTLIK. Glutamate 70 acts as the Proton acceptor in catalysis. ATP-binding positions include threonine 99, 121-125, tyrosine 137, and serine 225; that span reads GGMIQ.

Belongs to the type II pantothenate kinase family. In terms of assembly, homodimer.

It localises to the cytoplasm. The enzyme catalyses (R)-pantothenate + ATP = (R)-4'-phosphopantothenate + ADP + H(+). It participates in cofactor biosynthesis; coenzyme A biosynthesis; CoA from (R)-pantothenate: step 1/5. In terms of biological role, catalyzes the phosphorylation of pantothenate (Pan), the first step in CoA biosynthesis. In Staphylococcus aureus (strain Mu50 / ATCC 700699), this protein is Type II pantothenate kinase.